We begin with the raw amino-acid sequence, 540 residues long: Chaperonin GroEL (540 aa).

ATP contacts are provided by residues 29–32 (TLGP), 86–90 (DGTTT), Gly413, 477–479 (DAL), and Asp493.

The protein belongs to the chaperonin (HSP60) family. Forms a cylinder of 14 subunits composed of two heptameric rings stacked back-to-back. Interacts with the co-chaperonin GroES.

It is found in the cytoplasm. It catalyses the reaction ATP + H2O + a folded polypeptide = ADP + phosphate + an unfolded polypeptide.. Together with its co-chaperonin GroES, plays an essential role in assisting protein folding. The GroEL-GroES system forms a nano-cage that allows encapsulation of the non-native substrate proteins and provides a physical environment optimized to promote and accelerate protein folding. The protein is Chaperonin GroEL of Clostridium botulinum (strain Alaska E43 / Type E3).